The chain runs to 109 residues: Sperm-specific class P protein 16 (109 aa).

Positions 2–109 constitute an MSP domain; sequence SLTADPPACT…TVTIPMSATA (108 aa).

Expressed at higher level in testis.

This Caenorhabditis elegans protein is Sperm-specific class P protein 16 (ssp-16).